A 765-amino-acid chain; its full sequence is Protein transport protein Sec23A (765 aa).

C61, C66, C85, and C88 together coordinate Zn(2+). The Gelsolin-like repeat unit spans residues 632–718; it reads PEPVLLDSSS…EHGGSQARFL (87 aa).

The protein belongs to the SEC23/SEC24 family. SEC23 subfamily. As to quaternary structure, COPII is composed of at least five proteins: the Sec23/24 complex, the Sec13/31 complex and Sar1.

Its subcellular location is the cytoplasmic vesicle. It localises to the COPII-coated vesicle membrane. The protein localises to the endoplasmic reticulum membrane. It is found in the cytoplasm. The protein resides in the cytosol. Functionally, component of the coat protein complex II (COPII) which promotes the formation of transport vesicles from the endoplasmic reticulum (ER). The coat has two main functions, the physical deformation of the endoplasmic reticulum membrane into vesicles and the selection of cargo molecules for their transport to the Golgi complex. This chain is Protein transport protein Sec23A, found in Xenopus tropicalis (Western clawed frog).